Consider the following 461-residue polypeptide: Cysteine--tRNA ligase (461 aa).

Cys28 serves as a coordination point for Zn(2+). A 'HIGH' region motif is present at residues 30-40 (ITVYDLCHIGH). Cys209, His234, and Glu238 together coordinate Zn(2+). The short motif at 266–270 (KMSKS) is the 'KMSKS' region element. Residue Lys269 coordinates ATP.

It belongs to the class-I aminoacyl-tRNA synthetase family. Monomer. The cofactor is Zn(2+).

The protein localises to the cytoplasm. The catalysed reaction is tRNA(Cys) + L-cysteine + ATP = L-cysteinyl-tRNA(Cys) + AMP + diphosphate. The polypeptide is Cysteine--tRNA ligase (Escherichia fergusonii (strain ATCC 35469 / DSM 13698 / CCUG 18766 / IAM 14443 / JCM 21226 / LMG 7866 / NBRC 102419 / NCTC 12128 / CDC 0568-73)).